The primary structure comprises 337 residues: Transcription initiation factor IIB (337 aa).

The TFIIB-type zinc-finger motif lies at 37 to 68; the sequence is EKAVCPECGSRNLVHDYERAELVCGDCGLVID. Positions 41, 44, 60, and 63 each coordinate Zn(2+). 2 consecutive repeat copies span residues 154–237 and 248–329.

Belongs to the TFIIB family.

In terms of biological role, stabilizes TBP binding to an archaeal box-A promoter. Also responsible for recruiting RNA polymerase II to the pre-initiation complex (DNA-TBP-TFIIB). The chain is Transcription initiation factor IIB from Methanosarcina mazei (Methanosarcina frisia).